A 224-amino-acid polypeptide reads, in one-letter code: Phosphoribosylformylglycinamidine synthase subunit PurQ (224 aa).

Positions 2–224 (KIAVIVFPGS…SLLEEGKVKG (223 aa)) constitute a Glutamine amidotransferase type-1 domain. The active-site Nucleophile is the Cys-86. Residues His-195 and Glu-197 contribute to the active site.

In terms of assembly, part of the FGAM synthase complex composed of 1 PurL, 1 PurQ and 2 PurS subunits.

The protein resides in the cytoplasm. The enzyme catalyses N(2)-formyl-N(1)-(5-phospho-beta-D-ribosyl)glycinamide + L-glutamine + ATP + H2O = 2-formamido-N(1)-(5-O-phospho-beta-D-ribosyl)acetamidine + L-glutamate + ADP + phosphate + H(+). It carries out the reaction L-glutamine + H2O = L-glutamate + NH4(+). It functions in the pathway purine metabolism; IMP biosynthesis via de novo pathway; 5-amino-1-(5-phospho-D-ribosyl)imidazole from N(2)-formyl-N(1)-(5-phospho-D-ribosyl)glycinamide: step 1/2. Part of the phosphoribosylformylglycinamidine synthase complex involved in the purines biosynthetic pathway. Catalyzes the ATP-dependent conversion of formylglycinamide ribonucleotide (FGAR) and glutamine to yield formylglycinamidine ribonucleotide (FGAM) and glutamate. The FGAM synthase complex is composed of three subunits. PurQ produces an ammonia molecule by converting glutamine to glutamate. PurL transfers the ammonia molecule to FGAR to form FGAM in an ATP-dependent manner. PurS interacts with PurQ and PurL and is thought to assist in the transfer of the ammonia molecule from PurQ to PurL. This is Phosphoribosylformylglycinamidine synthase subunit PurQ from Ligilactobacillus salivarius (strain UCC118) (Lactobacillus salivarius).